Reading from the N-terminus, the 469-residue chain is Ribulose bisphosphate carboxylase large chain (469 aa).

The propeptide occupies 1–2 (MS). At proline 3 the chain carries N-acetylproline. N6,N6,N6-trimethyllysine is present on lysine 14. Substrate-binding residues include asparagine 123 and threonine 173. Residue lysine 175 is the Proton acceptor of the active site. Substrate is bound at residue lysine 177. The Mg(2+) site is built by lysine 201, aspartate 203, and glutamate 204. Lysine 201 bears the N6-carboxylysine mark. Histidine 294 (proton acceptor) is an active-site residue. Substrate is bound by residues arginine 295, histidine 327, and serine 379.

It belongs to the RuBisCO large chain family. Type I subfamily. Heterohexadecamer of 8 large chains and 8 small chains; disulfide-linked. The disulfide link is formed within the large subunit homodimers. Requires Mg(2+) as cofactor. The disulfide bond which can form in the large chain dimeric partners within the hexadecamer appears to be associated with oxidative stress and protein turnover.

It is found in the plastid. Its subcellular location is the chloroplast. The enzyme catalyses 2 (2R)-3-phosphoglycerate + 2 H(+) = D-ribulose 1,5-bisphosphate + CO2 + H2O. It carries out the reaction D-ribulose 1,5-bisphosphate + O2 = 2-phosphoglycolate + (2R)-3-phosphoglycerate + 2 H(+). In terms of biological role, ruBisCO catalyzes two reactions: the carboxylation of D-ribulose 1,5-bisphosphate, the primary event in carbon dioxide fixation, as well as the oxidative fragmentation of the pentose substrate in the photorespiration process. Both reactions occur simultaneously and in competition at the same active site. The protein is Ribulose bisphosphate carboxylase large chain of Iris ensata (Japanese iris).